The primary structure comprises 432 residues: MNQQSPIANISRFFNAPLAETDPDLAAAIGRELGRQQDGIELIASENIVSRAVLEAQGSVLTNKYAEGYPGKRYYGGCAAVDIAEELAIARAKELFGCAFANVQPHSGAQANQAVFLALLNAGDTILGMSLAAGGHLTHGAAPNLSGKWFDAVQYGVKREDGTLDYEELERLARERKPKLIIAGGSAYPRFIDFARIRKVADEVGAYFMVDMAHFAGLVAAGIFPSPVPHAHVVTTTTHKTLRGPRGGMILSNDLDLGKKINSAVFPGLQGGPLMHVIAAKAVAFGEALRPEFRAYQKALAENAKVLAETLVEGGLDIVTGGTDCHLMLVDLRPKNVTGKAAEASLERAHMTANKNAIPFDPAKPAVTSGIRLGTPAATTRGFGPDEFRMVGRFIVEVLDGLSASNDGDNAAVEAAVGAKVLELCARFPIYR.

(6S)-5,6,7,8-tetrahydrofolate is bound by residues L131 and G135 to L137. Position 240 is an N6-(pyridoxal phosphate)lysine (K240).

Belongs to the SHMT family. In terms of assembly, homodimer. It depends on pyridoxal 5'-phosphate as a cofactor.

The protein resides in the cytoplasm. The catalysed reaction is (6R)-5,10-methylene-5,6,7,8-tetrahydrofolate + glycine + H2O = (6S)-5,6,7,8-tetrahydrofolate + L-serine. The protein operates within one-carbon metabolism; tetrahydrofolate interconversion. It functions in the pathway amino-acid biosynthesis; glycine biosynthesis; glycine from L-serine: step 1/1. Catalyzes the reversible interconversion of serine and glycine with tetrahydrofolate (THF) serving as the one-carbon carrier. This reaction serves as the major source of one-carbon groups required for the biosynthesis of purines, thymidylate, methionine, and other important biomolecules. Also exhibits THF-independent aldolase activity toward beta-hydroxyamino acids, producing glycine and aldehydes, via a retro-aldol mechanism. In Acidiphilium cryptum (strain JF-5), this protein is Serine hydroxymethyltransferase.